A 24-amino-acid chain; its full sequence is Potassium channel toxin alpha-KTx 6 OcyKTx5 (24 aa).

Cys-3 and Cys-24 are joined by a disulfide.

It belongs to the short scorpion toxin superfamily. Potassium channel inhibitor family. Alpha-KTx 06 subfamily. As to expression, expressed by the venom gland.

It localises to the secreted. Its function is as follows. Blocks voltage-gated potassium channels. This is Potassium channel toxin alpha-KTx 6 OcyKTx5 from Opisthacanthus cayaporum (South American scorpion).